The chain runs to 67 residues: DNA-directed RNA polymerase subunit omega (67 aa).

Belongs to the RNA polymerase subunit omega family. As to quaternary structure, the RNAP catalytic core consists of 2 alpha, 1 beta, 1 beta' and 1 omega subunit. When a sigma factor is associated with the core the holoenzyme is formed, which can initiate transcription.

It catalyses the reaction RNA(n) + a ribonucleoside 5'-triphosphate = RNA(n+1) + diphosphate. Functionally, promotes RNA polymerase assembly. Latches the N- and C-terminal regions of the beta' subunit thereby facilitating its interaction with the beta and alpha subunits. The chain is DNA-directed RNA polymerase subunit omega from Listeria monocytogenes serotype 4b (strain F2365).